The chain runs to 652 residues: MSTRRETRAQAQQFIDNLKPLQHPNSEKVYLVGSRDDIRVGMRQIHQSETMIGGTESHPVLESNPPLKVYDCAGPYSDPNAKINVREGLDKFRANWILERNDTEQLIAASSGFTQQRLADYGLDHLRFDSLLSPRKAKQGQCVTQLHYARQGIVTPEMEYIAIRENMALSEVTDEALTQKAEGESFGAAISQPITPEFVRQEVARGRAIIPLNINHPEAEPMIIGRNFLVKVNANIGNSAVTSSIEEEVEKLVWSTRWGADTVMDLSTGRYIHETREWIIRNSPVPIGTVPIYQALEKVNGVAEDLTWEIFRDTLLEQAEQGVDYFTIHAGVLLRYVPMTAKRLTGIVSRGGSIMAKWCLSHHLENFLYEHFRDICELCAAYDVSLSLGDGMRPGSIADANDEAQFSELETLGELVKIAWEYDVQTIIEGPGHIPMNLIKENMDKQLEVCDEAPFYTLGPQTTDIAPGYDHFTSGIGAAMIAWYGCAMLCYVTPKEHLGLPNKEDVKQGLITYKIAAHAGDVAKGHPTAQIRDNALSKARFEFRWEDQYNLGLDPDTARAYHDESLPQESAKVAHFCSMCGPKFCSMKISQEVREYAAAQEVKLHTDTEFKAKSVKESGMAQMSAEFKAKGAALYHESGALVEDVELVETEG.

Substrate contacts are provided by residues Asn235, Met264, Tyr293, His329, Ser349–Gly351, Asp390–Arg393, and Glu429. Zn(2+) is bound at residue His433. Tyr456 is a substrate binding site. His497 contributes to the Zn(2+) binding site. Cys577, Cys580, and Cys585 together coordinate [4Fe-4S] cluster.

Belongs to the ThiC family. Homodimer. [4Fe-4S] cluster serves as cofactor.

It carries out the reaction 5-amino-1-(5-phospho-beta-D-ribosyl)imidazole + S-adenosyl-L-methionine = 4-amino-2-methyl-5-(phosphooxymethyl)pyrimidine + CO + 5'-deoxyadenosine + formate + L-methionine + 3 H(+). Its pathway is cofactor biosynthesis; thiamine diphosphate biosynthesis. Its function is as follows. Catalyzes the synthesis of the hydroxymethylpyrimidine phosphate (HMP-P) moiety of thiamine from aminoimidazole ribotide (AIR) in a radical S-adenosyl-L-methionine (SAM)-dependent reaction. The chain is Phosphomethylpyrimidine synthase from Shewanella sediminis (strain HAW-EB3).